The following is a 72-amino-acid chain: Translational regulator CsrA (72 aa).

It belongs to the CsrA/RsmA family. As to quaternary structure, homodimer; the beta-strands of each monomer intercalate to form a hydrophobic core, while the alpha-helices form wings that extend away from the core.

It localises to the cytoplasm. A translational regulator that binds mRNA to regulate translation initiation and/or mRNA stability. Usually binds in the 5'-UTR at or near the Shine-Dalgarno sequence preventing ribosome-binding, thus repressing translation. Its main target seems to be the major flagellin gene, while its function is anatagonized by FliW. This is Translational regulator CsrA from Agathobacter rectalis (strain ATCC 33656 / DSM 3377 / JCM 17463 / KCTC 5835 / VPI 0990) (Eubacterium rectale).